Reading from the N-terminus, the 165-residue chain is Phosphopantetheine adenylyltransferase (165 aa).

Threonine 9 lines the substrate pocket. ATP-binding positions include 9–10 (TF) and histidine 17. Lysine 41, leucine 78, and arginine 92 together coordinate substrate. ATP contacts are provided by residues 93 to 95 (GLR), glutamate 103, and 128 to 134 (HQAIASK).

It belongs to the bacterial CoaD family. Homohexamer. The cofactor is Mg(2+).

The protein localises to the cytoplasm. The catalysed reaction is (R)-4'-phosphopantetheine + ATP + H(+) = 3'-dephospho-CoA + diphosphate. The protein operates within cofactor biosynthesis; coenzyme A biosynthesis; CoA from (R)-pantothenate: step 4/5. Its function is as follows. Reversibly transfers an adenylyl group from ATP to 4'-phosphopantetheine, yielding dephospho-CoA (dPCoA) and pyrophosphate. The protein is Phosphopantetheine adenylyltransferase of Ruegeria sp. (strain TM1040) (Silicibacter sp.).